The sequence spans 118 residues: uncharacterized protein (118 aa).

The disordered stretch occupies residues 98–118 (KGKGNEGREEAEEPLEEPEEG). Acidic residues predominate over residues 106–118 (EEAEEPLEEPEEG).

This sequence belongs to the UPF0440 family.

This is an uncharacterized protein from Pyrococcus abyssi (strain GE5 / Orsay).